We begin with the raw amino-acid sequence, 448 residues long: Alpha-2B adrenergic receptor (448 aa).

The Extracellular portion of the chain corresponds to 1–12; the sequence is MDHQEPYSVQAT. A helical transmembrane segment spans residues 13–38; sequence AAIAAVITFLILFTIFGNALVILAVL. At 39–49 the chain is on the cytoplasmic side; the sequence is TSRSLPAPQNL. The chain crosses the membrane as a helical span at residues 50–75; the sequence is FLVSLAAADILVATLIIPFSLANELL. Residues 76-85 are Extracellular-facing; the sequence is GYWYFWRTWC. A disulfide bridge links cysteine 85 with cysteine 163. The helical transmembrane segment at 86–108 threads the bilayer; sequence EVYLALDVLFCTSSIVHLCAISL. At 109-130 the chain is on the cytoplasmic side; that stretch reads DRYWAVSRALEYNSKRTPRRIK. The helical transmembrane segment at 131 to 153 threads the bilayer; it reads CIILTVWLIAAVISLPPLIYKGD. The Extracellular portion of the chain corresponds to 154-168; that stretch reads QGPSPRGPQCKINQE. A helical transmembrane segment spans residues 169–192; it reads AWYILASSIGSFFAPCLIMILVYL. At 193 to 370 the chain is on the cytoplasmic side; that stretch reads RIYLIAKRSH…MTREKRFTFV (178 aa). Residues 203-326 are disordered; it reads RRGPRAKGGP…PASMCSPSLQ (124 aa). Over residues 293–309 the composition is skewed to acidic residues; it reads AEEEAEEEEEEEGDECE. The chain crosses the membrane as a helical span at residues 371-394; sequence LAVVIGVFVLCWFPFFFTYSLGAI. Over 395-403 the chain is Extracellular; sequence CPQHCKVPH. The helical transmembrane segment at 404–427 threads the bilayer; sequence GLFQFFFWIGYCNSSLNPVIYTIF. Topologically, residues 428–448 are cytoplasmic; it reads NQDFRRAFRRILCRQWTQTAW. A lipid anchor (S-palmitoyl cysteine) is attached at cysteine 440.

Belongs to the G-protein coupled receptor 1 family. Adrenergic receptor subfamily. ADRA2B sub-subfamily. Interacts with RAB26. Interacts with PPP1R9B.

The protein localises to the cell membrane. Its function is as follows. Alpha-2 adrenergic receptors mediate the catecholamine-induced inhibition of adenylate cyclase through the action of G proteins. The polypeptide is Alpha-2B adrenergic receptor (ADRA2B) (Cavia porcellus (Guinea pig)).